Here is a 152-residue protein sequence, read N- to C-terminus: MFRGANAVSLDAKGRISMPARYREELMARSAGQLIVTIDAMDPCLCIYPLPEWELIETKLRELPSLREETRRLQRLLIGNAVDLELDGSGRFLIPPRLREHASLDKHAMLVGQLNKFQLWNEDAWIAIANADLAAIKQQPGDLPGELRDLIL.

SpoVT-AbrB domains lie at 5–52 (ANAV…PLPE) and 81–124 (AVDL…NEDA).

Belongs to the MraZ family. In terms of assembly, forms oligomers.

It is found in the cytoplasm. The protein resides in the nucleoid. In Azotobacter vinelandii (strain DJ / ATCC BAA-1303), this protein is Transcriptional regulator MraZ.